The following is a 686-amino-acid chain: ATP-dependent DNA helicase RecG (686 aa).

The interval 50–149 (TVIDLNQAED…GTQTQENADV (100 aa)) is wedge domain. Residues 279–439 (DLKAPIRMHR…VFGEMDVSSI (161 aa)) enclose the Helicase ATP-binding domain. 292 to 299 (GDVGSGKT) serves as a coordination point for ATP. The short motif at 392–395 (DEQH) is the DEAH box element. Residues 462–618 (VLMQMTSELK…GFELSERDLE (157 aa)) form the Helicase C-terminal domain.

This sequence belongs to the helicase family. RecG subfamily. In terms of assembly, monomer.

The enzyme catalyses Couples ATP hydrolysis with the unwinding of duplex DNA by translocating in the 3'-5' direction.. It catalyses the reaction ATP + H2O = ADP + phosphate + H(+). Functionally, plays a critical role in recombination and DNA repair. Helps process Holliday junction intermediates to mature products by catalyzing branch migration. Has replication fork regression activity, unwinds stalled or blocked replication forks to make a HJ that can be resolved. Has a DNA unwinding activity characteristic of a DNA helicase with 3'-5' polarity. This Staphylococcus aureus (strain NCTC 8325 / PS 47) protein is ATP-dependent DNA helicase RecG.